Consider the following 191-residue polypeptide: uncharacterized protein (191 aa).

Residues glutamate 87 to glycine 184 form the Fe2OG dioxygenase domain.

This is an uncharacterized protein from Acanthamoeba polyphaga mimivirus (APMV).